Reading from the N-terminus, the 314-residue chain is 4-hydroxy-3-methylbut-2-enyl diphosphate reductase (314 aa).

Cys-12 contacts [4Fe-4S] cluster. (2E)-4-hydroxy-3-methylbut-2-enyl diphosphate contacts are provided by His-41 and His-74. Positions 41 and 74 each coordinate dimethylallyl diphosphate. Residues His-41 and His-74 each coordinate isopentenyl diphosphate. Residue Cys-96 participates in [4Fe-4S] cluster binding. His-124 serves as a coordination point for (2E)-4-hydroxy-3-methylbut-2-enyl diphosphate. Residue His-124 participates in dimethylallyl diphosphate binding. His-124 contacts isopentenyl diphosphate. Glu-126 (proton donor) is an active-site residue. Residue Thr-167 participates in (2E)-4-hydroxy-3-methylbut-2-enyl diphosphate binding. Cys-197 is a [4Fe-4S] cluster binding site. The (2E)-4-hydroxy-3-methylbut-2-enyl diphosphate site is built by Ser-225, Ser-226, Asn-227, and Ser-269. Positions 225, 226, 227, and 269 each coordinate dimethylallyl diphosphate. Isopentenyl diphosphate contacts are provided by Ser-225, Ser-226, Asn-227, and Ser-269.

Belongs to the IspH family. [4Fe-4S] cluster is required as a cofactor.

The enzyme catalyses isopentenyl diphosphate + 2 oxidized [2Fe-2S]-[ferredoxin] + H2O = (2E)-4-hydroxy-3-methylbut-2-enyl diphosphate + 2 reduced [2Fe-2S]-[ferredoxin] + 2 H(+). It catalyses the reaction dimethylallyl diphosphate + 2 oxidized [2Fe-2S]-[ferredoxin] + H2O = (2E)-4-hydroxy-3-methylbut-2-enyl diphosphate + 2 reduced [2Fe-2S]-[ferredoxin] + 2 H(+). It functions in the pathway isoprenoid biosynthesis; dimethylallyl diphosphate biosynthesis; dimethylallyl diphosphate from (2E)-4-hydroxy-3-methylbutenyl diphosphate: step 1/1. It participates in isoprenoid biosynthesis; isopentenyl diphosphate biosynthesis via DXP pathway; isopentenyl diphosphate from 1-deoxy-D-xylulose 5-phosphate: step 6/6. Catalyzes the conversion of 1-hydroxy-2-methyl-2-(E)-butenyl 4-diphosphate (HMBPP) into a mixture of isopentenyl diphosphate (IPP) and dimethylallyl diphosphate (DMAPP). Acts in the terminal step of the DOXP/MEP pathway for isoprenoid precursor biosynthesis. In Actinobacillus pleuropneumoniae serotype 7 (strain AP76), this protein is 4-hydroxy-3-methylbut-2-enyl diphosphate reductase.